Here is a 416-residue protein sequence, read N- to C-terminus: 26S proteasome regulatory subunit 8 (416 aa).

The segment covering 1–18 has biased composition (low complexity); the sequence is MAPPASTASSADPSKPTA. Positions 1-29 are disordered; the sequence is MAPPASTASSADPSKPTAQKLTEESDEKT. ATP is bound at residue 200 to 207; it reads GPPGTGKT.

Belongs to the AAA ATPase family. Component of the 19S proteasome regulatory particle complex. The 26S proteasome consists of a 20S core particle (CP) and two 19S regulatory subunits (RP). Interacts with elt-2.

It localises to the cytoplasm. The protein resides in the nucleus. In terms of biological role, component of the 26S proteasome, a multiprotein complex involved in the ATP-dependent degradation of ubiquitinated proteins. This complex plays a key role in the maintenance of protein homeostasis by removing misfolded or damaged proteins, which could impair cellular functions, and by removing proteins whose functions are no longer required. Therefore, the proteasome participates in numerous cellular processes, including cell cycle progression, apoptosis, or DNA damage repair. Belongs to the heterohexameric ring of AAA (ATPases associated with diverse cellular activities) proteins that unfolds ubiquitinated target proteins that are concurrently translocated into a proteolytic chamber and degraded into peptides. In addition, regulates gene expression in response to bacterial infection. Binds to the GATA transcription factor elt-2 to control its transcriptional activity and thus the expression of elt-2-dependent genes in response to infection by Gram-negative bacteria such as P.aeruginosa. The sequence is that of 26S proteasome regulatory subunit 8 from Caenorhabditis elegans.